A 129-amino-acid polypeptide reads, in one-letter code: Small ribosomal subunit protein uS8 (129 aa).

Belongs to the universal ribosomal protein uS8 family. As to quaternary structure, part of the 30S ribosomal subunit. Contacts proteins S5 and S12.

One of the primary rRNA binding proteins, it binds directly to 16S rRNA central domain where it helps coordinate assembly of the platform of the 30S subunit. The chain is Small ribosomal subunit protein uS8 from Legionella pneumophila (strain Corby).